We begin with the raw amino-acid sequence, 286 residues long: Probable endonuclease 4 (286 aa).

Zn(2+) contacts are provided by histidine 71, histidine 111, glutamate 147, aspartate 181, histidine 184, histidine 218, aspartate 231, histidine 233, and glutamate 263.

Belongs to the AP endonuclease 2 family. Requires Zn(2+) as cofactor.

The catalysed reaction is Endonucleolytic cleavage to 5'-phosphooligonucleotide end-products.. Endonuclease IV plays a role in DNA repair. It cleaves phosphodiester bonds at apurinic or apyrimidinic (AP) sites, generating a 3'-hydroxyl group and a 5'-terminal sugar phosphate. The chain is Probable endonuclease 4 from Vibrio cholerae serotype O1 (strain ATCC 39541 / Classical Ogawa 395 / O395).